The primary structure comprises 216 residues: Endoplasmic reticulum vesicle protein 25 (216 aa).

Residues 1–21 (MMVSLKSSLFFMLALLTVVHA) form the signal peptide. Residues 22–184 (LNFDIPAKTN…TNESTNERVK (163 aa)) are Lumenal-facing. One can recognise a GOLD domain in the interval 34 to 150 (PFCLREYVGE…LEPVEADIRR (117 aa)). A helical membrane pass occupies residues 185-205 (NFAYLTFISLFVLVIWQILYL). Residues 206 to 216 (RSFFQRKHLIP) are Cytoplasmic-facing.

This sequence belongs to the EMP24/GP25L family.

Its subcellular location is the endoplasmic reticulum membrane. It is found in the golgi apparatus membrane. In terms of biological role, constituent of COPII-coated endoplasmic reticulum-derived transport vesicles. Required for efficient transport of a subset of secretory proteins to the Golgi. Facilitates retrograde transport from the Golgi to the endoplasmic reticulum. The chain is Endoplasmic reticulum vesicle protein 25 (erv25) from Schizosaccharomyces pombe (strain 972 / ATCC 24843) (Fission yeast).